A 274-amino-acid polypeptide reads, in one-letter code: 2,3,4,5-tetrahydropyridine-2,6-dicarboxylate N-succinyltransferase (274 aa).

Substrate is bound by residues R105 and D142.

The protein belongs to the transferase hexapeptide repeat family. In terms of assembly, homotrimer.

It localises to the cytoplasm. It catalyses the reaction (S)-2,3,4,5-tetrahydrodipicolinate + succinyl-CoA + H2O = (S)-2-succinylamino-6-oxoheptanedioate + CoA. It participates in amino-acid biosynthesis; L-lysine biosynthesis via DAP pathway; LL-2,6-diaminopimelate from (S)-tetrahydrodipicolinate (succinylase route): step 1/3. The chain is 2,3,4,5-tetrahydropyridine-2,6-dicarboxylate N-succinyltransferase from Methylobacillus flagellatus (strain ATCC 51484 / DSM 6875 / VKM B-1610 / KT).